We begin with the raw amino-acid sequence, 871 residues long: Synaptonemal complex protein 1 (871 aa).

Residues 1-40 (MQKLGFPAMKSLDKPRSLSGSANMYSFSNRKPPDSVSSGS) are disordered. Polar residues predominate over residues 18–40 (LSGSANMYSFSNRKPPDSVSSGS). 2 coiled-coil regions span residues 58–304 (MRTD…DKKN) and 331–608 (LALD…EESK). Disordered stretches follow at residues 708 to 741 (VMSD…RSEH) and 778 to 871 (SVLS…YAFD). Polar residues predominate over residues 719–728 (VNSNKNYSIS). Residues 729 to 741 (KDSRLGGSKRSEH) are compositionally biased toward basic and acidic residues. Over residues 831 to 847 (LTPQSIAKGTGMTSHAR) the composition is skewed to polar residues.

It is found in the nucleus. Functionally, required for chromosome synapsis and normal fidelity of crossing over. This is Synaptonemal complex protein 1 (ZYP1A) from Arabidopsis thaliana (Mouse-ear cress).